The following is a 248-amino-acid chain: Small ribosomal subunit protein uS2 (248 aa).

Belongs to the universal ribosomal protein uS2 family.

This chain is Small ribosomal subunit protein uS2, found in Herminiimonas arsenicoxydans.